The chain runs to 2543 residues: Zinc finger FYVE domain-containing protein 26 (2543 aa).

The residue at position 297 (Ser-297) is a Phosphoserine. 4 disordered regions span residues 523 to 545, 609 to 636, 699 to 722, and 744 to 820; these read ECRD…SLSS, GLLG…GCQE, LSSH…SRDG, and VTSN…GRLQ. A phosphoserine mark is found at Ser-615, Ser-619, and Ser-703. Over residues 699–710 the composition is skewed to basic and acidic residues; that stretch reads LSSHSPPEKPKL. The segment covering 767-776 has biased composition (basic residues); sequence SLRRGRRTRR. Over residues 786–806 the composition is skewed to low complexity; that stretch reads SNPSLESTSSELSTSTSEGSL. Phosphoserine is present on Ser-802. Residues 870–897 adopt a coiled-coil conformation; that stretch reads MFMERYQEVIQELSRVEHKIENQNSDGG. Residues 1272–1299 form a disordered region; that stretch reads LSTLSSPKPTGNSTLERKPHSSPRDSSL. The segment covering 1273 to 1285 has biased composition (polar residues); that stretch reads STLSSPKPTGNST. 4 positions are modified to phosphoserine: Ser-1744, Ser-1765, Ser-1784, and Ser-1786. The tract at residues 1780-1812 is disordered; it reads STIHSPSPRERSFPESQPPPEFVPPATPPGRPQ. A compositionally biased stretch (pro residues) spans 1795–1810; the sequence is SQPPPEFVPPATPPGR. Residues 1816–1876 form an FYVE-type zinc finger; it reads DESASICMVC…VCDQCYSYYN (61 aa). Zn(2+)-binding residues include Cys-1822, Cys-1825, Cys-1839, Cys-1842, Cys-1847, Cys-1850, Cys-1868, and Cys-1871.

Belongs to the ZFYVE26 family. Interacts with AP5Z1, AP5B1, AP5S1 and SPG11. Interacts with TTC19 and KIF13A.

It localises to the cytoplasm. Its subcellular location is the cytoskeleton. The protein localises to the microtubule organizing center. The protein resides in the centrosome. It is found in the midbody. In terms of biological role, phosphatidylinositol 3-phosphate-binding protein required for the abscission step in cytokinesis: recruited to the midbody during cytokinesis and acts as a regulator of abscission. May also be required for efficient homologous recombination DNA double-strand break repair. The chain is Zinc finger FYVE domain-containing protein 26 (ZFYVE26) from Ailuropoda melanoleuca (Giant panda).